Consider the following 740-residue polypeptide: Ethylene receptor 1 (740 aa).

The next 3 membrane-spanning stretches (helical) occupy residues 23-43, 54-74, and 92-112; these read ISDFFIALAYFSIPLELIYFV, VLVQFGAFIVLCGATHLINLW, and VLTAVVSCATALMLVHIIPDL. Cu cation contacts are provided by Cys65 and His69. Positions 158–307 constitute a GAF domain; it reads DRHTILKTTL…VVADQVAVAL (150 aa). The 239-residue stretch at 350-588 folds into the Histidine kinase domain; sequence VMNHEMRTPM…TFIVKLGIAD (239 aa). A Phosphohistidine; by autocatalysis modification is found at His353. Residues 614-731 enclose the Response regulatory domain; the sequence is KVLVMDDNGV…KMRSVLSELI (118 aa). At Asp662 the chain carries 4-aspartylphosphate.

The protein belongs to the ethylene receptor family. As to quaternary structure, homodimer; disulfide-linked. Cu cation is required as a cofactor. In terms of processing, activation probably requires a transfer of a phosphate group between a His in the transmitter domain and an Asp of the receiver domain. In terms of tissue distribution, in seeds and placenta.

It localises to the endoplasmic reticulum membrane. The enzyme catalyses ATP + protein L-histidine = ADP + protein N-phospho-L-histidine.. In terms of biological role, may act early in the ethylene signal transduction pathway, possibly as an ethylene receptor, or as a regulator of the pathway. The chain is Ethylene receptor 1 (ETR1) from Cucumis melo var. cantalupensis (Netted muskmelon).